A 387-amino-acid polypeptide reads, in one-letter code: 3-ketoacyl-CoA thiolase (387 aa).

Cys91 (acyl-thioester intermediate) is an active-site residue. Catalysis depends on proton acceptor residues His343 and Cys373.

Belongs to the thiolase-like superfamily. Thiolase family. Heterotetramer of two alpha chains (FadB) and two beta chains (FadA).

It is found in the cytoplasm. It catalyses the reaction an acyl-CoA + acetyl-CoA = a 3-oxoacyl-CoA + CoA. It participates in lipid metabolism; fatty acid beta-oxidation. Catalyzes the final step of fatty acid oxidation in which acetyl-CoA is released and the CoA ester of a fatty acid two carbons shorter is formed. This chain is 3-ketoacyl-CoA thiolase, found in Photobacterium profundum (strain SS9).